The following is a 93-amino-acid chain: MDGIRYAVFTDKSIQLLGKNQYTSNVESGSTRTEIKHWVELFFGVKVIAMNSHRLRGKARRMGPIMGQTMHYRRMIITLQPGYSIPPLRKKRT.

It belongs to the universal ribosomal protein uL23 family. Part of the 50S ribosomal subunit.

It localises to the plastid. It is found in the chloroplast. Binds to 23S rRNA. The chain is Large ribosomal subunit protein uL23cz/uL23cy (rpl23-A) from Lactuca sativa (Garden lettuce).